Reading from the N-terminus, the 77-residue chain is Apidermin 2 (77 aa).

Positions 1 to 16 (MKSLLILFAIVAVVAA) are cleaved as a signal peptide.

Expressed in the epidermis, hypopharyngeal glands, fat body, trachea, esophagus and stomach.

The protein localises to the secreted. In terms of biological role, antimicrobial peptide that binds cell wall carbohydrates of microbial symbionts and induces structural damage. Binds the cell wall carbohydrates mannan, N-acetyl-D-glucosamine and lipopolysaccharide. Can target fungi, Gram-negative and Gram-positive bacteria. The protein is Apidermin 2 of Apis mellifera (Honeybee).